Consider the following 450-residue polypeptide: Probable helicase D10 (450 aa).

The region spanning 95-240 is the Helicase ATP-binding domain; the sequence is PIYEECDDTC…MFKDFFGYKI (146 aa). Residue 108–115 participates in ATP binding; sequence GKPGFGKT. Residues 193 to 196 carry the DEAH box motif; sequence DEVH. A Helicase C-terminal domain is found at 289–439; sequence NLAHLYVNMG…TITMTPEKAV (151 aa).

It catalyses the reaction ATP + H2O = ADP + phosphate + H(+). The sequence is that of Probable helicase D10 (D10) from Escherichia phage T5 (Enterobacteria phage T5).